A 138-amino-acid chain; its full sequence is Large ribosomal subunit protein uL16 (138 aa).

A compositionally biased stretch (basic residues) spans 1 to 13; the sequence is MLQPKRRKYRKEQ. Residues 1-24 are disordered; the sequence is MLQPKRRKYRKEQKGRNTGKATRG.

This sequence belongs to the universal ribosomal protein uL16 family. Part of the 50S ribosomal subunit.

Functionally, binds 23S rRNA and is also seen to make contacts with the A and possibly P site tRNAs. This chain is Large ribosomal subunit protein uL16, found in Cupriavidus necator (strain ATCC 17699 / DSM 428 / KCTC 22496 / NCIMB 10442 / H16 / Stanier 337) (Ralstonia eutropha).